A 210-amino-acid polypeptide reads, in one-letter code: MRDPVDTYMNYLVPMVVEQTNRGERAYDIYSRLLKERIIFLTGPVEDGMSTLAVAQLLFLEAENPKKEISMYINSPGGVVTSGLAIYDTMQFIRPAVSTLCIGQAASMGSLLLTAGEKGLRFALPNARIMVHQPSGGFQGQVTDIMLHAQEILSLKKRLNEIYVKHTGQPIEKIEDALERDNFMTANAAQEFGLIDTVIDKRPSDEPAKA.

S107 (nucleophile) is an active-site residue. Residue H132 is part of the active site.

This sequence belongs to the peptidase S14 family. As to quaternary structure, fourteen ClpP subunits assemble into 2 heptameric rings which stack back to back to give a disk-like structure with a central cavity, resembling the structure of eukaryotic proteasomes.

It is found in the cytoplasm. The catalysed reaction is Hydrolysis of proteins to small peptides in the presence of ATP and magnesium. alpha-casein is the usual test substrate. In the absence of ATP, only oligopeptides shorter than five residues are hydrolyzed (such as succinyl-Leu-Tyr-|-NHMec, and Leu-Tyr-Leu-|-Tyr-Trp, in which cleavage of the -Tyr-|-Leu- and -Tyr-|-Trp bonds also occurs).. Functionally, cleaves peptides in various proteins in a process that requires ATP hydrolysis. Has a chymotrypsin-like activity. Plays a major role in the degradation of misfolded proteins. This is ATP-dependent Clp protease proteolytic subunit from Azorhizobium caulinodans (strain ATCC 43989 / DSM 5975 / JCM 20966 / LMG 6465 / NBRC 14845 / NCIMB 13405 / ORS 571).